The following is a 1025-amino-acid chain: RNA cytidine acetyltransferase (1025 aa).

Residue Gly287–Leu296 participates in ATP binding. Lys426 is subject to N6-acetyllysine. Arg470 lines the ATP pocket. An N-acetyltransferase domain is found at Cys558–Thr753. Acetyl-CoA is bound by residues Ile629–Val631 and Gln636–Ser642. The tract at residues Pro702–Lys1025 is required for localization to the nucleolus and midbody. The residue at position 716 (Thr716) is a Phosphothreonine. Position 725 (Arg725) interacts with acetyl-CoA. Phosphoserine occurs at positions 934, 984, and 987. The segment at Ser990 to Lys1025 is disordered. Over residues Glu997 to Asp1018 the composition is skewed to basic and acidic residues.

Belongs to the RNA cytidine acetyltransferase family. NAT10 subfamily. In terms of assembly, part of the small subunit (SSU) processome, composed of more than 70 proteins and the RNA chaperone small nucleolar RNA (snoRNA) U3. Interacts with THUMPD1. Interacts with SUN1 (via N-terminus). Interacts with TERT. Acetylation at Lys-426 is required to activation of rRNA transcription. May be autoacetylated; however ability to autoacetylate in vivo requires additional evidences.

It localises to the nucleus. The protein localises to the nucleolus. It is found in the midbody. The catalysed reaction is a cytidine in 18S rRNA + acetyl-CoA + ATP + H2O = an N(4)-acetylcytidine in 18S rRNA + ADP + phosphate + CoA + H(+). The enzyme catalyses a cytidine in tRNA + acetyl-CoA + ATP + H2O = an N(4)-acetylcytidine in tRNA + ADP + phosphate + CoA + H(+). It carries out the reaction a cytidine in mRNA + acetyl-CoA + ATP + H2O = an N(4)-acetylcytidine in mRNA + ADP + phosphate + CoA + H(+). Its activity is regulated as follows. Specifically inhibited by remodelin (4-[2-(2-cyclopentylidenehydrazinyl)-4-thiazolyl]-benzonitrile, monohydrobromide), a hydrobromide salt molecule. Remodelin can improve nuclear architecture, chromatin organization and fitness of cells from patients suffering from Hutchinson-Gilford progeria syndrome (HGPS); molecular mechanisms explaining the relation between NAT10 activity and nuclear architecture are however unclear. In terms of biological role, RNA cytidine acetyltransferase that catalyzes the formation of N(4)-acetylcytidine (ac4C) modification on mRNAs, 18S rRNA and tRNAs. Catalyzes ac4C modification of a broad range of mRNAs, enhancing mRNA stability and translation. mRNA ac4C modification is frequently present within wobble cytidine sites and promotes translation efficiency. Mediates the formation of ac4C at position 1842 in 18S rRNA. May also catalyze the formation of ac4C at position 1337 in 18S rRNA. Required for early nucleolar cleavages of precursor rRNA at sites A0, A1 and A2 during 18S rRNA synthesis. Catalyzes the formation of ac4C in serine and leucine tRNAs. Requires the tRNA-binding adapter protein THUMPD1 for full tRNA acetyltransferase activity but not for 18S rRNA acetylation. In addition to RNA acetyltransferase activity, also able to acetylate lysine residues of proteins, such as histones, microtubules, p53/TP53 and MDM2, in vitro. The relevance of the protein lysine acetyltransferase activity is however unsure in vivo. Activates telomerase activity by stimulating the transcription of TERT, and may also regulate telomerase function by affecting the balance of telomerase subunit assembly, disassembly, and localization. Involved in the regulation of centrosome duplication by acetylating CENATAC during mitosis, promoting SASS6 proteasome degradation. Part of the small subunit (SSU) processome, first precursor of the small eukaryotic ribosomal subunit. During the assembly of the SSU processome in the nucleolus, many ribosome biogenesis factors, an RNA chaperone and ribosomal proteins associate with the nascent pre-rRNA and work in concert to generate RNA folding, modifications, rearrangements and cleavage as well as targeted degradation of pre-ribosomal RNA by the RNA exosome. In Homo sapiens (Human), this protein is RNA cytidine acetyltransferase.